The primary structure comprises 150 residues: UPF0756 membrane protein A1S_2121 (150 aa).

4 consecutive transmembrane segments (helical) span residues 22-42 (SQNAAVTIAAGILIVIKITPL), 45-65 (FFPYIQAHGLNLGILILTIGV), 83-103 (FISFKSLVAIAIGLLVAWLGG), and 115-135 (VVAGLLIGTVAGVALLRGVPV).

This sequence belongs to the UPF0756 family.

The protein localises to the cell membrane. This Acinetobacter baumannii (strain ATCC 17978 / DSM 105126 / CIP 53.77 / LMG 1025 / NCDC KC755 / 5377) protein is UPF0756 membrane protein A1S_2121.